Here is a 739-residue protein sequence, read N- to C-terminus: MDSKIQPTLRPGSSCPRPEWPEQERAEQLARGAALKWASGIFYRPEQLTRLGQYRSREIQRNYSLEARIKSVVQSYLEGVQTGVWQLTRALEAVQGTREALSQAHHLLKGLSRTSQTLEPLRECVVQHKQLQILTRLLPRLQAVPATVAHTQTLIDSERLLEAYVSLRELEQLKEETLAPLGGLELPIFQGLGLLAEALGQAVEAAAGAAGRLAREDPALLVAAIRVAEVETERTILGQAPRDWRQRCLRALQEGLERVHFASPVLPEPGALAGWLEALQVALPAELATAEALVAPCCPPSYRVVELWAHTLHSGLRRSVQQLLAGPELGAADTFALLHWALHVYTGKEMMGNLELGPEADVSQLEPLLTSENIEQLEAAFVAQVQVSVAQWLKKALDGEVAEWSGEQEPPTDPSGFYHSPMPAIVLQILAENIQVTNLISDSLHRRAHNMAVSELGAFLRSFSDALIRFSRDHLRGDAVAPHYVPYLLSAFNHQSALRSSVSVLLPDGEASGVLAPVEAALDDVQRRICRLVLEVLQVELQPLFSALPSRRWLLSSELLDGVCEQTSHFCQDFWRVRKPGVQLLLAEAERTVVLQYLRALMQGRLVCRGTDERSQAAERLRQDAAQLKELFLGLGLEESAHCAPVLLALRELLNLHDPTLLGLEVAGLRQQFPDVSEDHVSALLDLRGDVSREHRQAALSSLQAGPPPSPSTGRRALFSLVPTPTPSLSSCLPSGPCS.

2 disordered regions span residues 1–21 (MDSK…PEWP) and 698–718 (AALS…RRAL). Residues 1-370 (MDSKIQPTLR…DVSQLEPLLT (370 aa)) are mediates interaction with EXOC2, EXOC4 and EXOC5.

It belongs to the SEC6 family. In terms of assembly, interacts with EXOC2, EXOC4 and EXOC5; may be part of the exocyst. As to expression, ubiquitously expressed.

Its subcellular location is the cytoplasmic vesicle. It is found in the secretory vesicle. In terms of biological role, as part of the exocyst, may play a role in regulated exocytosis of insulin granules. In Mus musculus (Mouse), this protein is Exocyst complex component 3-like protein (Exoc3l1).